Here is a 465-residue protein sequence, read N- to C-terminus: MPYFMRLALFLFCLMALVESRKPRRKRWTGHLETSKPSHLYKKNLDVTKIRTGKPRPLLRVEDHDFTMRPAFGGPAIPVGVDVQVESLDSISEVDMDFTMTLYLRHYWRDERLAFPSSSNRSMTFDGRLVKKIWVPDVFFVHSKRSFTHDTTTDNIMLRVFPDGHVLYSMRITVTAMCNMDFSHFPLDSQTCSLELESYAYTDEDLMLYWKNGDESLKTDEKISLSQFLIQKFHTTSRLAFYSSTGWYNRLYINFTLRRHIFFFLLQTYFPATLMVMLSWVSFWIDHRAVPARVSLGIMTVLTMSTIITGVNASMPRVSYIRAVDIYLWVSFVFVFLSVLEYAAVNYLTTVQEQKERKLRDKFPCTCGMLHSRTMTLDGSYSESEANSLAGYPRSHILPEEERQDKIVVHLALNSELTSSRKKGLLKGQMGLYIFQNTHAIDKYSRLIFPAFYIVFNLIYWSVFS.

The first 20 residues, 1–20 (MPYFMRLALFLFCLMALVES), serve as a signal peptide directing secretion. Over 21–260 (RKPRRKRWTG…LYINFTLRRH (240 aa)) the chain is Extracellular. R105 contacts 4-aminobutanoate. The N-linked (GlcNAc...) asparagine glycan is linked to N120. S169 contributes to the 4-aminobutanoate binding site. Cysteines 178 and 192 form a disulfide. E197 serves as a coordination point for 4-aminobutanoate. N-linked (GlcNAc...) asparagine glycosylation is present at N254. Residues 261 to 281 (IFFFLLQTYFPATLMVMLSWV) traverse the membrane as a helical segment. Topologically, residues 282-293 (SFWIDHRAVPAR) are cytoplasmic. The helical transmembrane segment at 294–314 (VSLGIMTVLTMSTIITGVNAS) threads the bilayer. The Extracellular portion of the chain corresponds to 315-325 (MPRVSYIRAVD). Residues 326 to 346 (IYLWVSFVFVFLSVLEYAAVN) traverse the membrane as a helical segment. Over 347 to 443 (YLTTVQEQKE…IFQNTHAIDK (97 aa)) the chain is Cytoplasmic. Residues 444-464 (YSRLIFPAFYIVFNLIYWSVF) traverse the membrane as a helical segment. A topological domain (extracellular) is located at residue S465.

This sequence belongs to the ligand-gated ion channel (TC 1.A.9) family. Gamma-aminobutyric acid receptor (TC 1.A.9.5) subfamily. GABRR2 sub-subfamily. Three rho subunits (rho-1/GBRR1, rho-2/GBRR2 and rho-3/GBRR3) coassemble either to form functional homopentamers or heteropentamers. Rho-2 is unable to form a functional homopentamer. Interacts with SQSTM1. As to expression, expressed in spinal cord and in cerebellum. Expressed in retina.

The protein localises to the postsynaptic cell membrane. It localises to the cell membrane. It catalyses the reaction chloride(in) = chloride(out). Its activity is regulated as follows. In contrast with rho-1 and rho-3 homopentamers, rho-2 GABAARs are not inhibited by picrotoxin. Its function is as follows. Rho subunit of the pentameric ligand-gated chloride channels responsible for mediating the effects of gamma-aminobutyric acid (GABA), the major inhibitory neurotransmitter in the brain. Rho-containing GABA-gated chloride channels are a subclass of GABA(A) receptors (GABAARs) entirely composed of rho subunits, where GABA molecules bind at the rho intersubunit interfaces. When activated by GABA, rho-GABAARs selectively allow the flow of chloride anions across the cell membrane down their electrochemical gradient. Rho-2 GABAARs may contribute to the regulation of glial development in the cerebellum by controlling extrasynaptic transmission. Rho-2 GABAARs are also involved in neuronal tonic (extrasynaptic) and phasic (synaptic) transmission in the Purkinje neurons of the cerebellum. Rho-2 GABAARs expressed in retina may play a role in retinal neurotransmission. The sequence is that of Gamma-aminobutyric acid receptor subunit rho-2 from Rattus norvegicus (Rat).